A 351-amino-acid chain; its full sequence is Uroporphyrinogen decarboxylase (351 aa).

Residues 25 to 29 (RQAGR), D74, Y151, S206, and H325 each bind substrate.

This sequence belongs to the uroporphyrinogen decarboxylase family. Homodimer.

It is found in the cytoplasm. The enzyme catalyses uroporphyrinogen III + 4 H(+) = coproporphyrinogen III + 4 CO2. It functions in the pathway porphyrin-containing compound metabolism; protoporphyrin-IX biosynthesis; coproporphyrinogen-III from 5-aminolevulinate: step 4/4. Catalyzes the decarboxylation of four acetate groups of uroporphyrinogen-III to yield coproporphyrinogen-III. The polypeptide is Uroporphyrinogen decarboxylase (Chlorobium luteolum (strain DSM 273 / BCRC 81028 / 2530) (Pelodictyon luteolum)).